Reading from the N-terminus, the 342-residue chain is MVWTQLHAEIHRTIRSRHLFEGNKRLLVAVSGGQDSLCLIKLLLDLQPKWGWELGIAHCDHRWRADSQANADHVKNLAENWGVSFYLETATKPVNSEATAREWRYQALSAIAQAHNYQYIVTGHTASDRAETLLYNLMRGTGADGLQALTWQRPLTENILLVRPLLEITRKQTEQFCQEFQLPIWEDSTNQDLKYARNRIRQELIPYLQANFNPQAELAIAQTAELLQADVEYLERTAQQLKEEAMEWEVGEEFLSSSSPSSLLLRLNRQVLQKAPLALQRRVMRQILQEILADAPNFEHIEKLTALITAPNRSQTDPFPGGAIAQVQGNWIILRNGERRSN.

31–36 contacts ATP; that stretch reads SGGQDS.

The protein belongs to the tRNA(Ile)-lysidine synthase family.

Its subcellular location is the cytoplasm. It carries out the reaction cytidine(34) in tRNA(Ile2) + L-lysine + ATP = lysidine(34) in tRNA(Ile2) + AMP + diphosphate + H(+). In terms of biological role, ligates lysine onto the cytidine present at position 34 of the AUA codon-specific tRNA(Ile) that contains the anticodon CAU, in an ATP-dependent manner. Cytidine is converted to lysidine, thus changing the amino acid specificity of the tRNA from methionine to isoleucine. In Nostoc sp. (strain PCC 7120 / SAG 25.82 / UTEX 2576), this protein is tRNA(Ile)-lysidine synthase.